The sequence spans 397 residues: S-adenosylmethionine synthase (397 aa).

An ATP-binding site is contributed by His16. Asp18 contributes to the Mg(2+) binding site. Glu44 provides a ligand contact to K(+). L-methionine contacts are provided by Glu57 and Gln100. A flexible loop region spans residues 100 to 110 (QSPDIAQGVDN). ATP-binding positions include 175–177 (DGK), 242–243 (RF), Asp251, 257–258 (RK), Ala274, and Lys278. Asp251 is an L-methionine binding site. Lys282 serves as a coordination point for L-methionine.

It belongs to the AdoMet synthase family. In terms of assembly, homotetramer; dimer of dimers. Requires Mg(2+) as cofactor. K(+) is required as a cofactor.

The protein localises to the cytoplasm. It catalyses the reaction L-methionine + ATP + H2O = S-adenosyl-L-methionine + phosphate + diphosphate. It participates in amino-acid biosynthesis; S-adenosyl-L-methionine biosynthesis; S-adenosyl-L-methionine from L-methionine: step 1/1. Its function is as follows. Catalyzes the formation of S-adenosylmethionine (AdoMet) from methionine and ATP. The overall synthetic reaction is composed of two sequential steps, AdoMet formation and the subsequent tripolyphosphate hydrolysis which occurs prior to release of AdoMet from the enzyme. The sequence is that of S-adenosylmethionine synthase from Leifsonia xyli subsp. xyli (strain CTCB07).